Here is a 244-residue protein sequence, read N- to C-terminus: Ribonuclease PH (244 aa).

Phosphate contacts are provided by residues Arg-86 and 124–126; that span reads GTR.

Belongs to the RNase PH family. As to quaternary structure, homohexameric ring arranged as a trimer of dimers.

It carries out the reaction tRNA(n+1) + phosphate = tRNA(n) + a ribonucleoside 5'-diphosphate. Phosphorolytic 3'-5' exoribonuclease that plays an important role in tRNA 3'-end maturation. Removes nucleotide residues following the 3'-CCA terminus of tRNAs; can also add nucleotides to the ends of RNA molecules by using nucleoside diphosphates as substrates, but this may not be physiologically important. Probably plays a role in initiation of 16S rRNA degradation (leading to ribosome degradation) during starvation. This is Ribonuclease PH from Oceanobacillus iheyensis (strain DSM 14371 / CIP 107618 / JCM 11309 / KCTC 3954 / HTE831).